The chain runs to 466 residues: L-seryl-tRNA(Sec) selenium transferase (466 aa).

Lys-293 carries the post-translational modification N6-(pyridoxal phosphate)lysine.

The protein belongs to the SelA family. It depends on pyridoxal 5'-phosphate as a cofactor.

It is found in the cytoplasm. It catalyses the reaction L-seryl-tRNA(Sec) + selenophosphate + H(+) = L-selenocysteinyl-tRNA(Sec) + phosphate. It functions in the pathway aminoacyl-tRNA biosynthesis; selenocysteinyl-tRNA(Sec) biosynthesis; selenocysteinyl-tRNA(Sec) from L-seryl-tRNA(Sec) (bacterial route): step 1/1. In terms of biological role, converts seryl-tRNA(Sec) to selenocysteinyl-tRNA(Sec) required for selenoprotein biosynthesis. The chain is L-seryl-tRNA(Sec) selenium transferase from Desulfotalea psychrophila (strain LSv54 / DSM 12343).